A 490-amino-acid chain; its full sequence is MSRMAEQQLYIHGGYTSATSGRTFETINPANGNVLATVQAAGREDVDRAVKSAQQGQKIWAAMTAMERSRILRRAVDILRERNDELAKLETLDTGKAYSETSTVDIVTGADVLEYYAGLIPALEGSQIPLRETSFVYTRREPLGVVAGIGAWNYPIQIALWKSAPALAAGNAMIFKPSEVTPLTALKLAEIYSEAGLPDGVFNVLPGVGAETGQYLTDHPGIAKVSFTGGVASGKKVMANSAASSLKEVTMELGGKSPLIVFDDADLDLAADIAMMANFFSSGQVCTNGTRVFVPTKCKAAFEQKVLARVERIRAGDVFDPQTNFGPLVSFPHRDNVLRYIAKGKEEGARVLCGGNVLKGDSFDNGAWVAPTVFTDCSDDMTIVREEIFGPVMSILTYESEDEVIRRANDTDYGLAAGIVTADLNRAHRVIHQLEAGICWINTWGESPAEIPVGGYKHSGIGRENGVMTLQSYTQVKSIQVEMAKFQSIF.

K(+)-binding residues include Thr-26, Ile-27, and Asp-93. 150-152 (GAW) lines the NAD(+) pocket. Residue Lys-162 is the Charge relay system of the active site. 176 to 179 (KPSE) contacts NAD(+). K(+) is bound at residue Val-180. 230–233 (GVAS) provides a ligand contact to NAD(+). Leu-246 contributes to the K(+) binding site. Residue Glu-252 is the Proton acceptor of the active site. Positions 254, 286, and 387 each coordinate NAD(+). Cys-286 (nucleophile) is an active-site residue. Cys-286 carries the post-translational modification Cysteine sulfenic acid (-SOH). The K(+) site is built by Lys-457 and Gly-460. Glu-464 functions as the Charge relay system in the catalytic mechanism.

It belongs to the aldehyde dehydrogenase family. As to quaternary structure, dimer of dimers. It depends on K(+) as a cofactor.

The enzyme catalyses betaine aldehyde + NAD(+) + H2O = glycine betaine + NADH + 2 H(+). Its pathway is amine and polyamine biosynthesis; betaine biosynthesis via choline pathway; betaine from betaine aldehyde: step 1/1. Involved in the biosynthesis of the osmoprotectant glycine betaine. Catalyzes the irreversible oxidation of betaine aldehyde to the corresponding acid. The chain is Betaine aldehyde dehydrogenase from Escherichia coli O6:H1 (strain CFT073 / ATCC 700928 / UPEC).